A 771-amino-acid chain; its full sequence is Probable dipeptidyl peptidase 4 (771 aa).

The first 16 residues, 1–16 (MKYSKLLLLLVSVVQA), serve as a signal peptide directing secretion. N-linked (GlcNAc...) asparagine glycans are attached at residues asparagine 37, asparagine 80, asparagine 114, asparagine 173, asparagine 222, asparagine 470, and asparagine 495. Active-site charge relay system residues include serine 618, aspartate 695, and histidine 730.

The protein belongs to the peptidase S9B family.

Its subcellular location is the secreted. The catalysed reaction is Release of an N-terminal dipeptide, Xaa-Yaa-|-Zaa-, from a polypeptide, preferentially when Yaa is Pro, provided Zaa is neither Pro nor hydroxyproline.. Functionally, extracellular dipeptidyl-peptidase which removes N-terminal dipeptides sequentially from polypeptides having unsubstituted N-termini provided that the penultimate residue is proline. This Aspergillus flavus (strain ATCC 200026 / FGSC A1120 / IAM 13836 / NRRL 3357 / JCM 12722 / SRRC 167) protein is Probable dipeptidyl peptidase 4 (dpp4).